A 404-amino-acid chain; its full sequence is D-galactonate dehydratase family member Ent638_1932 (404 aa).

Asparagine 37 and histidine 122 together coordinate substrate. The active-site Proton donor/acceptor is the tyrosine 159. Position 212 (aspartate 212) interacts with Mg(2+). Catalysis depends on histidine 214, which acts as the Proton donor/acceptor. 2 residues coordinate Mg(2+): glutamate 238 and glutamate 264. Glutamate 264, arginine 285, histidine 314, aspartate 318, and glutamate 341 together coordinate substrate.

The protein belongs to the mandelate racemase/muconate lactonizing enzyme family. GalD subfamily. Mg(2+) serves as cofactor.

The catalysed reaction is D-mannonate = 2-dehydro-3-deoxy-D-gluconate + H2O. Its function is as follows. Has low D-mannonate dehydratase activity (in vitro), suggesting that this is not a physiological substrate and that it has no significant role in D-mannonate degradation in vivo. Has no detectable activity with a panel of 70 other acid sugars (in vitro). In Enterobacter sp. (strain 638), this protein is D-galactonate dehydratase family member Ent638_1932.